The chain runs to 437 residues: Aspartate--tRNA(Asp/Asn) ligase (437 aa).

Glu-175 contributes to the L-aspartate binding site. Positions Gln-197–Lys-200 are aspartate. Arg-219 is a binding site for L-aspartate. ATP is bound by residues Arg-219–Glu-221, Arg-227–Leu-229, and Glu-360. Residues Glu-360 and Ser-363 each contribute to the Mg(2+) site. Ser-363 and Arg-367 together coordinate L-aspartate. Position 408–411 (Gly-408–Arg-411) interacts with ATP.

This sequence belongs to the class-II aminoacyl-tRNA synthetase family. Type 2 subfamily. Homodimer. The cofactor is Mg(2+).

Its subcellular location is the cytoplasm. It carries out the reaction tRNA(Asx) + L-aspartate + ATP = L-aspartyl-tRNA(Asx) + AMP + diphosphate. Functionally, aspartyl-tRNA synthetase with relaxed tRNA specificity since it is able to aspartylate not only its cognate tRNA(Asp) but also tRNA(Asn). Reaction proceeds in two steps: L-aspartate is first activated by ATP to form Asp-AMP and then transferred to the acceptor end of tRNA(Asp/Asn). The sequence is that of Aspartate--tRNA(Asp/Asn) ligase from Methanothermobacter thermautotrophicus (strain ATCC 29096 / DSM 1053 / JCM 10044 / NBRC 100330 / Delta H) (Methanobacterium thermoautotrophicum).